The primary structure comprises 186 residues: Ribosome-recycling factor (186 aa).

This sequence belongs to the RRF family.

Its subcellular location is the cytoplasm. In terms of biological role, responsible for the release of ribosomes from messenger RNA at the termination of protein biosynthesis. May increase the efficiency of translation by recycling ribosomes from one round of translation to another. The chain is Ribosome-recycling factor from Chlorobium phaeovibrioides (strain DSM 265 / 1930) (Prosthecochloris vibrioformis (strain DSM 265)).